Reading from the N-terminus, the 172-residue chain is Nascent polypeptide-associated complex subunit beta (172 aa).

Disordered regions lie at residues 36-58 (KTGK…GDDK) and 142-172 (QNMQ…DKVE). Residues 41-50 (TPRRKMKRAP) show a composition bias toward basic residues. In terms of domain architecture, NAC-A/B spans 54 to 119 (GGDDKKLQQT…GEDKELTELV (66 aa)).

Belongs to the NAC-beta family. Part of the nascent polypeptide-associated complex (NAC), consisting of EGD2 and EGD1. NAC associates with ribosomes via EGD1.

It localises to the cytoplasm. It is found in the nucleus. Component of the nascent polypeptide-associated complex (NAC), a dynamic component of the ribosomal exit tunnel, protecting the emerging polypeptides from interaction with other cytoplasmic proteins to ensure appropriate nascent protein targeting. The NAC complex also promotes mitochondrial protein import by enhancing productive ribosome interactions with the outer mitochondrial membrane and blocks the inappropriate interaction of ribosomes translating non-secretory nascent polypeptides with translocation sites in the membrane of the endoplasmic reticulum. EGD1 may act as a transcription factor that exert a negative effect on the expression of several genes that are transcribed by RNA polymerase II. The polypeptide is Nascent polypeptide-associated complex subunit beta (EGD1) (Pyricularia oryzae (strain 70-15 / ATCC MYA-4617 / FGSC 8958) (Rice blast fungus)).